Reading from the N-terminus, the 360-residue chain is GDSL esterase/lipase At2g31540 (360 aa).

The first 23 residues, Met1 to Ala23, serve as a signal peptide directing secretion. Ser42 functions as the Nucleophile in the catalytic mechanism. N-linked (GlcNAc...) asparagine glycosylation is found at Asn104 and Asn326. Active-site residues include Asp334 and His337.

Belongs to the 'GDSL' lipolytic enzyme family.

Its subcellular location is the secreted. In Arabidopsis thaliana (Mouse-ear cress), this protein is GDSL esterase/lipase At2g31540.